Consider the following 468-residue polypeptide: Ribulose bisphosphate carboxylase large chain (468 aa).

The residue at position 5 (Lys5) is an N6,N6,N6-trimethyllysine. 2 residues coordinate substrate: Asn114 and Thr164. The Proton acceptor role is filled by Lys166. A substrate-binding site is contributed by Lys168. Mg(2+)-binding residues include Lys192, Asp194, and Glu195. Lys192 bears the N6-carboxylysine mark. His285 functions as the Proton acceptor in the catalytic mechanism. Substrate-binding residues include Arg286, His318, and Ser370.

This sequence belongs to the RuBisCO large chain family. Type I subfamily. As to quaternary structure, heterohexadecamer of 8 large chains and 8 small chains; disulfide-linked. The disulfide link is formed within the large subunit homodimers. Requires Mg(2+) as cofactor. In terms of processing, the disulfide bond which can form in the large chain dimeric partners within the hexadecamer appears to be associated with oxidative stress and protein turnover.

It localises to the plastid. Its subcellular location is the chloroplast. It carries out the reaction 2 (2R)-3-phosphoglycerate + 2 H(+) = D-ribulose 1,5-bisphosphate + CO2 + H2O. The enzyme catalyses D-ribulose 1,5-bisphosphate + O2 = 2-phosphoglycolate + (2R)-3-phosphoglycerate + 2 H(+). In terms of biological role, ruBisCO catalyzes two reactions: the carboxylation of D-ribulose 1,5-bisphosphate, the primary event in carbon dioxide fixation, as well as the oxidative fragmentation of the pentose substrate in the photorespiration process. Both reactions occur simultaneously and in competition at the same active site. This chain is Ribulose bisphosphate carboxylase large chain, found in Catesbaea spinosa.